A 140-amino-acid polypeptide reads, in one-letter code: Nucleoside diphosphate kinase (140 aa).

Residues lysine 11, phenylalanine 59, arginine 87, threonine 93, arginine 104, and asparagine 114 each contribute to the ATP site. Catalysis depends on histidine 117, which acts as the Pros-phosphohistidine intermediate.

It belongs to the NDK family. Homotetramer. Mg(2+) serves as cofactor.

The protein localises to the cytoplasm. It catalyses the reaction a 2'-deoxyribonucleoside 5'-diphosphate + ATP = a 2'-deoxyribonucleoside 5'-triphosphate + ADP. The enzyme catalyses a ribonucleoside 5'-diphosphate + ATP = a ribonucleoside 5'-triphosphate + ADP. Major role in the synthesis of nucleoside triphosphates other than ATP. The ATP gamma phosphate is transferred to the NDP beta phosphate via a ping-pong mechanism, using a phosphorylated active-site intermediate. In Hyphomonas neptunium (strain ATCC 15444), this protein is Nucleoside diphosphate kinase.